The following is a 206-amino-acid chain: Ribosomal RNA small subunit methyltransferase G (206 aa).

S-adenosyl-L-methionine contacts are provided by residues Gly-74, Leu-79, 125-126, and Arg-140; that span reads VE.

Belongs to the methyltransferase superfamily. RNA methyltransferase RsmG family.

The protein localises to the cytoplasm. The enzyme catalyses guanosine(527) in 16S rRNA + S-adenosyl-L-methionine = N(7)-methylguanosine(527) in 16S rRNA + S-adenosyl-L-homocysteine. Functionally, specifically methylates the N7 position of guanine in position 527 of 16S rRNA. The chain is Ribosomal RNA small subunit methyltransferase G from Shewanella sp. (strain MR-7).